We begin with the raw amino-acid sequence, 141 residues long: Hemoglobin subunit alpha-D (141 aa).

Positions Met1–Arg141 constitute a Globin domain. Heme b contacts are provided by His58 and His87.

The protein belongs to the globin family. Heterotetramer of two alpha-D chains and two beta chains. In terms of tissue distribution, red blood cells.

In terms of biological role, involved in oxygen transport from the lung to the various peripheral tissues. In Phasianus colchicus colchicus (Black-necked pheasant), this protein is Hemoglobin subunit alpha-D (HBAD).